Consider the following 279-residue polypeptide: Bifunctional protein FolD (279 aa).

NADP(+) is bound by residues 162 to 164 (GRS), Ser-187, and Ile-228.

The protein belongs to the tetrahydrofolate dehydrogenase/cyclohydrolase family. Homodimer.

The catalysed reaction is (6R)-5,10-methylene-5,6,7,8-tetrahydrofolate + NADP(+) = (6R)-5,10-methenyltetrahydrofolate + NADPH. The enzyme catalyses (6R)-5,10-methenyltetrahydrofolate + H2O = (6R)-10-formyltetrahydrofolate + H(+). The protein operates within one-carbon metabolism; tetrahydrofolate interconversion. In terms of biological role, catalyzes the oxidation of 5,10-methylenetetrahydrofolate to 5,10-methenyltetrahydrofolate and then the hydrolysis of 5,10-methenyltetrahydrofolate to 10-formyltetrahydrofolate. The chain is Bifunctional protein FolD from Acidiphilium cryptum (strain JF-5).